We begin with the raw amino-acid sequence, 89 residues long: MASTSARSGDKKDTWPIQAAASLGGGQKASLSRSEEFLTRISTELTDEALFTARSHMNPMPDKEKQTKDQGTQISRHVFFTKTRGTDTR.

Disordered stretches follow at residues 1–31 (MAST…KASL) and 54–89 (RSHM…TDTR).

Specifically expressed in testis (at protein level).

The protein is Putative protein T-ENOL of Rattus norvegicus (Rat).